The chain runs to 54 residues: Preprotein translocase subunit SecG (54 aa).

The Cytoplasmic segment spans residues 1-31 (MSSGQNSGGLMSSAGLVRYFDAEDRNSIRID). The chain crosses the membrane as a helical span at residues 32–53 (PKTIVAFGVLFGVGVLVLNALA). Residue Ile54 is a topological domain, extracellular.

Belongs to the SEC61-beta family. In terms of assembly, component of the protein translocase complex. Heterotrimer consisting of alpha (SecY), beta (SecG) and gamma (SecE) subunits. Can form oligomers of the heterotrimer.

It is found in the cell membrane. Involved in protein export. The function of the beta subunit is unknown, but it may be involved in stabilization of the trimeric complex. The polypeptide is Preprotein translocase subunit SecG (Haloquadratum walsbyi (strain DSM 16790 / HBSQ001)).